The following is a 414-amino-acid chain: Histidine--tRNA ligase (414 aa).

It belongs to the class-II aminoacyl-tRNA synthetase family. In terms of assembly, homodimer.

It is found in the cytoplasm. The enzyme catalyses tRNA(His) + L-histidine + ATP = L-histidyl-tRNA(His) + AMP + diphosphate + H(+). This chain is Histidine--tRNA ligase, found in Rickettsia rickettsii (strain Iowa).